Consider the following 165-residue polypeptide: Sporulation thiol-disulfide oxidoreductase A (165 aa).

Residues 1-26 (MLTKRLLTIYIMLLGLIAWFPGAAQA) form the signal peptide. The Thioredoxin domain occupies 27 to 165 (EEKQPAVPAV…AEQLKEWTEE (139 aa)). Cysteine 65 and cysteine 68 are joined by a disulfide.

This sequence belongs to the thioredoxin family.

The protein resides in the spore outer membrane. Thiol-disulfide oxidoreductase with a reductive function, involved in spore cortex synthesis. It could be involved either in breaking disulfide bonds in cortex components or in proteins that are important for cortex synthesis, or in thiol/disulfide bond interchange. In Bacillus subtilis (strain 168), this protein is Sporulation thiol-disulfide oxidoreductase A (stoA).